We begin with the raw amino-acid sequence, 439 residues long: Proline--tRNA ligase (439 aa).

The protein belongs to the class-II aminoacyl-tRNA synthetase family. ProS type 2 subfamily. As to quaternary structure, homodimer.

It is found in the cytoplasm. The catalysed reaction is tRNA(Pro) + L-proline + ATP = L-prolyl-tRNA(Pro) + AMP + diphosphate. Functionally, catalyzes the attachment of proline to tRNA(Pro) in a two-step reaction: proline is first activated by ATP to form Pro-AMP and then transferred to the acceptor end of tRNA(Pro). The chain is Proline--tRNA ligase from Nitrobacter winogradskyi (strain ATCC 25391 / DSM 10237 / CIP 104748 / NCIMB 11846 / Nb-255).